Reading from the N-terminus, the 174-residue chain is Cytochrome c-550-like protein (174 aa).

The first 37 residues, 1–37 (MPGQTQGAKRWRVPGRGWRWAGILLLVWLGLASPAAG), serve as a signal peptide directing secretion. C82, C85, H86, and C136 together coordinate heme c.

The protein belongs to the cytochrome c family. PsbV subfamily. Heme c serves as cofactor.

The protein localises to the cellular thylakoid membrane. In terms of biological role, possible low-potential cytochrome c. The sequence is that of Cytochrome c-550-like protein (psbV2) from Synechococcus sp. (strain JA-3-3Ab) (Cyanobacteria bacterium Yellowstone A-Prime).